The sequence spans 205 residues: Ribosomal RNA small subunit methyltransferase G (205 aa).

Residues glycine 76, leucine 81, 127–128 (IE), and arginine 140 contribute to the S-adenosyl-L-methionine site.

It belongs to the methyltransferase superfamily. RNA methyltransferase RsmG family.

Its subcellular location is the cytoplasm. It carries out the reaction guanosine(527) in 16S rRNA + S-adenosyl-L-methionine = N(7)-methylguanosine(527) in 16S rRNA + S-adenosyl-L-homocysteine. Functionally, specifically methylates the N7 position of guanine in position 527 of 16S rRNA. This chain is Ribosomal RNA small subunit methyltransferase G, found in Francisella tularensis subsp. holarctica (strain FTNF002-00 / FTA).